Reading from the N-terminus, the 458-residue chain is NADH-ubiquinone oxidoreductase chain 4 (458 aa).

A run of 13 helical transmembrane segments spans residues 23-43 (LLWTATTFFSFLIAALSTLTL), 59-79 (IDQFSCPLIMLSCWLLPLTIM), 99-119 (LLILLQVLLCITFGASNLLMF), 148-168 (LYFLFYTLSASLPLLLALIMI), 174-194 (SLSIYIIPLSNLTLLLNTPWS), 197-217 (LWWIACFLAFLIKMPLYIFHL), 227-247 (PIAGSMILAAILLKLGGYGMI), 260-280 (LAVPFMIIAMWGMIVTSSICL), 289-311 (IAYSSVSHMGLVVAGIFTMTPWA), 315-337 (ALAMMIAHGLVSSGLLCLANITY), 355-375 (FPLMSFWWLMMTFANMALPPF), 396-416 (ILLLGLSMTLTALFSLNMLIM), and 438-458 (LMLMHMAPIILLIANPSAIMI).

The protein belongs to the complex I subunit 4 family.

Its subcellular location is the mitochondrion membrane. The enzyme catalyses a ubiquinone + NADH + 5 H(+)(in) = a ubiquinol + NAD(+) + 4 H(+)(out). Functionally, core subunit of the mitochondrial membrane respiratory chain NADH dehydrogenase (Complex I) that is believed to belong to the minimal assembly required for catalysis. Complex I functions in the transfer of electrons from NADH to the respiratory chain. The immediate electron acceptor for the enzyme is believed to be ubiquinone. This chain is NADH-ubiquinone oxidoreductase chain 4 (MT-ND4), found in Petromyzon marinus (Sea lamprey).